Reading from the N-terminus, the 344-residue chain is Phosphoribosylformylglycinamidine cyclo-ligase (344 aa).

This sequence belongs to the AIR synthase family.

It localises to the cytoplasm. The catalysed reaction is 2-formamido-N(1)-(5-O-phospho-beta-D-ribosyl)acetamidine + ATP = 5-amino-1-(5-phospho-beta-D-ribosyl)imidazole + ADP + phosphate + H(+). It functions in the pathway purine metabolism; IMP biosynthesis via de novo pathway; 5-amino-1-(5-phospho-D-ribosyl)imidazole from N(2)-formyl-N(1)-(5-phospho-D-ribosyl)glycinamide: step 2/2. This chain is Phosphoribosylformylglycinamidine cyclo-ligase, found in Neisseria meningitidis serogroup B (strain ATCC BAA-335 / MC58).